We begin with the raw amino-acid sequence, 326 residues long: Metallophosphoesterase domain-containing protein 1 (326 aa).

The protein belongs to the UPF0046 family. In terms of tissue distribution, expressed predominantly in adult brain.

In terms of biological role, may have metallophosphoesterase activity (in vitro). In Homo sapiens (Human), this protein is Metallophosphoesterase domain-containing protein 1 (MPPED1).